We begin with the raw amino-acid sequence, 907 residues long: MKLPCTIRSITSSHFRNSFRNVSSVIDSAQEECRIAEDKQFVDAVKRIVRGKRSWEIALSSELVSRRLKTVHVEEILIGTIDDPKLGLRFFNFLGLHRGFDHSTASFCILIHALVKANLFWPASSLLQTLLLRALKPSDVFNVLFSCYEKCKLSSSSSFDLLIQHYVRSRRVLDGVLVFKMMITKVSLLPEVRTLSALLHGLVKFRHFGLAMELFNDMVSVGIRPDVYIYTGVIRSLCELKDLSRAKEMIAHMEATGCDVNIVPYNVLIDGLCKKQKVWEAVGIKKDLAGKDLKPDVVTYCTLVYGLCKVQEFEIGLEMMDEMLCLRFSPSEAAVSSLVEGLRKRGKIEEALNLVKRVVDFGVSPNLFVYNALIDSLCKGRKFHEAELLFDRMGKIGLRPNDVTYSILIDMFCRRGKLDTALSFLGEMVDTGLKLSVYPYNSLINGHCKFGDISAAEGFMAEMINKKLEPTVVTYTSLMGGYCSKGKINKALRLYHEMTGKGIAPSIYTFTTLLSGLFRAGLIRDAVKLFNEMAEWNVKPNRVTYNVMIEGYCEEGDMSKAFEFLKEMTEKGIVPDTYSYRPLIHGLCLTGQASEAKVFVDGLHKGNCELNEICYTGLLHGFCREGKLEEALSVCQEMVQRGVDLDLVCYGVLIDGSLKHKDRKLFFGLLKEMHDRGLKPDDVIYTSMIDAKSKTGDFKEAFGIWDLMINEGCVPNEVTYTAVINGLCKAGFVNEAEVLCSKMQPVSSVPNQVTYGCFLDILTKGEVDMQKAVELHNAILKGLLANTATYNMLIRGFCRQGRIEEASELITRMIGDGVSPDCITYTTMINELCRRNDVKKAIELWNSMTEKGIRPDRVAYNTLIHGCCVAGEMGKATELRNEMLRQGLIPNNKTSRTTTSNDTSSKS.

PPR repeat units lie at residues 103 to 137 (STASFCILIHALVKANLFWPASSLLQTLLLRALKP), 155 to 185 (SSSSFDLLIQHYVRSRRVLDGVLVFKMMITK), 191 to 225 (EVRTLSALLHGLVKFRHFGLAMELFNDMVSVGIRP), 226 to 260 (DVYIYTGVIRSLCELKDLSRAKEMIAHMEATGCDV), 261 to 295 (NIVPYNVLIDGLCKKQKVWEAVGIKKDLAGKDLKP), 296 to 330 (DVVTYCTLVYGLCKVQEFEIGLEMMDEMLCLRFSP), 331 to 365 (SEAAVSSLVEGLRKRGKIEEALNLVKRVVDFGVSP), 366 to 400 (NLFVYNALIDSLCKGRKFHEAELLFDRMGKIGLRP), 401 to 435 (NDVTYSILIDMFCRRGKLDTALSFLGEMVDTGLKL), 436 to 470 (SVYPYNSLINGHCKFGDISAAEGFMAEMINKKLEP), 471 to 505 (TVVTYTSLMGGYCSKGKINKALRLYHEMTGKGIAP), 506 to 540 (SIYTFTTLLSGLFRAGLIRDAVKLFNEMAEWNVKP), 541 to 575 (NRVTYNVMIEGYCEEGDMSKAFEFLKEMTEKGIVP), 576 to 610 (DTYSYRPLIHGLCLTGQASEAKVFVDGLHKGNCEL), 611 to 645 (NEICYTGLLHGFCREGKLEEALSVCQEMVQRGVDL), 646 to 680 (DLVCYGVLIDGSLKHKDRKLFFGLLKEMHDRGLKP), 681 to 715 (DDVIYTSMIDAKSKTGDFKEAFGIWDLMINEGCVP), 716 to 750 (NEVTYTAVINGLCKAGFVNEAEVLCSKMQPVSSVP), 751 to 782 (NQVTYGCFLDILTKGEVDMQKAVELHNAILKG), 786 to 820 (NTATYNMLIRGFCRQGRIEEASELITRMIGDGVSP), 821 to 855 (DCITYTTMINELCRRNDVKKAIELWNSMTEKGIRP), and 856 to 890 (DRVAYNTLIHGCCVAGEMGKATELRNEMLRQGLIP). The segment at 887–907 (GLIPNNKTSRTTTSNDTSSKS) is disordered. The segment covering 891–907 (NNKTSRTTTSNDTSSKS) has biased composition (low complexity).

Belongs to the PPR family. P subfamily.

This Arabidopsis thaliana (Mouse-ear cress) protein is Putative pentatricopeptide repeat-containing protein At5g59900.